Here is a 163-residue protein sequence, read N- to C-terminus: NADH-quinone oxidoreductase subunit I (163 aa).

4Fe-4S ferredoxin-type domains lie at 54-84 and 94-123; these read LRRY…IESD and TRYD…ETQI. 8 residues coordinate [4Fe-4S] cluster: Cys-64, Cys-67, Cys-70, Cys-74, Cys-103, Cys-106, Cys-109, and Cys-113.

It belongs to the complex I 23 kDa subunit family. NDH-1 is composed of 14 different subunits. Subunits NuoA, H, J, K, L, M, N constitute the membrane sector of the complex. [4Fe-4S] cluster serves as cofactor.

The protein localises to the cell inner membrane. It carries out the reaction a quinone + NADH + 5 H(+)(in) = a quinol + NAD(+) + 4 H(+)(out). Its function is as follows. NDH-1 shuttles electrons from NADH, via FMN and iron-sulfur (Fe-S) centers, to quinones in the respiratory chain. The immediate electron acceptor for the enzyme in this species is believed to be ubiquinone. Couples the redox reaction to proton translocation (for every two electrons transferred, four hydrogen ions are translocated across the cytoplasmic membrane), and thus conserves the redox energy in a proton gradient. This chain is NADH-quinone oxidoreductase subunit I, found in Cupriavidus necator (strain ATCC 17699 / DSM 428 / KCTC 22496 / NCIMB 10442 / H16 / Stanier 337) (Ralstonia eutropha).